Here is a 426-residue protein sequence, read N- to C-terminus: ATP-dependent Clp protease ATP-binding subunit ClpX (426 aa).

In terms of domain architecture, ClpX-type ZB spans 1 to 52; the sequence is MNEIKKRCSFCNKEESLDNPIINSGITPDVYICNYCLIVGSEILTGYLNKNP. Positions 8, 11, 33, and 36 each coordinate Zn(2+). 129 to 136 is a binding site for ATP; sequence PTGSGKTL.

This sequence belongs to the ClpX chaperone family. As to quaternary structure, component of the ClpX-ClpP complex. Forms a hexameric ring that, in the presence of ATP, binds to fourteen ClpP subunits assembled into a disk-like structure with a central cavity, resembling the structure of eukaryotic proteasomes.

ATP-dependent specificity component of the Clp protease. It directs the protease to specific substrates. Can perform chaperone functions in the absence of ClpP. The protein is ATP-dependent Clp protease ATP-binding subunit ClpX of Helicobacter hepaticus (strain ATCC 51449 / 3B1).